The sequence spans 916 residues: Cadherin-4 (916 aa).

Residues 1 to 20 (MTAGAGVLLLLLSLSGALRA) form the signal peptide. Positions 21 to 169 (HNEDLTTRET…NANGLRRRKR (149 aa)) are excised as a propeptide. The interval 124–168 (TSSPHSGHKPQKGKKVVALDPSPPPKDTLLPWPQHQNANGLRRRK) is disordered. A compositionally biased stretch (basic residues) spans 129–138 (SGHKPQKGKK). 5 consecutive Cadherin domains span residues 170–277 (DWVI…RPEF), 278–392 (INQV…PPEF), 393–507 (TAST…APYF), 508–613 (PSNH…DNAP), and 614–724 (ELLP…TIGA). Residues 170–734 (DWVIPPINVP…VAAAGLGTGA (565 aa)) are Extracellular-facing. Residues Asn-283, Asn-412, Asn-557, Asn-632, Asn-661, and Asn-702 are each glycosylated (N-linked (GlcNAc...) asparagine). A helical membrane pass occupies residues 735 to 756 (IVAILICILILLTMVLLFVMWM). The Cytoplasmic portion of the chain corresponds to 757–916 (KRREKERHTK…ADMYGGGEED (160 aa)). Residues 806–838 (MGHVPSKAPGVRRVDERPVGAEPQYPIRPMVPH) are disordered.

Expressed mainly in brain but also found in other tissues.

It is found in the cell membrane. Cadherins are calcium-dependent cell adhesion proteins. They preferentially interact with themselves in a homophilic manner in connecting cells; cadherins may thus contribute to the sorting of heterogeneous cell types. May play an important role in retinal development. This chain is Cadherin-4 (CDH4), found in Homo sapiens (Human).